A 458-amino-acid chain; its full sequence is Adenylosuccinate synthetase (458 aa).

GTP-binding positions include 17 to 23 and 45 to 47; these read GDEGKGK and GHT. Residue Asp-18 is the Proton acceptor of the active site. Residues Asp-18 and Gly-45 each coordinate Mg(2+). Residues 18–21, 43–46, Thr-137, Arg-151, Gln-247, Thr-262, and Arg-330 each bind IMP; these read DEGK and NAGH. Catalysis depends on His-46, which acts as the Proton donor. 326–332 lines the substrate pocket; that stretch reads VTTGRSR. Residues Arg-332, 358-360, and 440-442 each bind GTP; these read KLD and STG.

It belongs to the adenylosuccinate synthetase family. Homodimer. The cofactor is Mg(2+).

It is found in the cytoplasm. It catalyses the reaction IMP + L-aspartate + GTP = N(6)-(1,2-dicarboxyethyl)-AMP + GDP + phosphate + 2 H(+). It functions in the pathway purine metabolism; AMP biosynthesis via de novo pathway; AMP from IMP: step 1/2. Functionally, plays an important role in the de novo pathway of purine nucleotide biosynthesis. Catalyzes the first committed step in the biosynthesis of AMP from IMP. This is Adenylosuccinate synthetase from Albidiferax ferrireducens (strain ATCC BAA-621 / DSM 15236 / T118) (Rhodoferax ferrireducens).